The chain runs to 206 residues: Probable GTP-binding protein EngB (206 aa).

Positions 29–201 (ILPEVAVVGR…MIMIQDALND (173 aa)) constitute an EngB-type G domain. GTP contacts are provided by residues 37 to 44 (GRSNVGKS), 64 to 68 (GKTQA), 82 to 85 (DLPG), 149 to 152 (TKID), and 180 to 182 (YSV). Ser44 and Thr66 together coordinate Mg(2+).

This sequence belongs to the TRAFAC class TrmE-Era-EngA-EngB-Septin-like GTPase superfamily. EngB GTPase family. Mg(2+) is required as a cofactor.

Necessary for normal cell division and for the maintenance of normal septation. The sequence is that of Probable GTP-binding protein EngB from Protochlamydia amoebophila (strain UWE25).